Consider the following 490-residue polypeptide: Sec sixty-one protein homolog (490 aa).

At 1–32 (MSGFRLIDIVKPILPILPEVELPFEKLPFDDK) the chain is on the cytoplasmic side. Residues 33–53 (IVYTIFAGLIYLFAQFPLVGL) form a helical membrane-spanning segment. At 54–121 (PKATTPNVND…DRELFQSLTK (68 aa)) the chain is on the lumenal side. A helical transmembrane segment spans residues 122-142 (VFAIVQYVILTNIFIFAGYFG). The Cytoplasmic segment spans residues 143–146 (DDLS). The chain crosses the membrane as a helical span at residues 147–167 (VVQIGLINFQLVGAGIFTTLL). Residues 168–174 (AEVIDKG) are Lumenal-facing. A helical membrane pass occupies residues 175-195 (FGFSSGAMIINTVVIATNLVA). Over 196–242 (DTFGVSQIKVGEDDQTEAQGALINLIQGLRSKHKTFIGGIISAFNRD) the chain is Cytoplasmic. A helical membrane pass occupies residues 243–263 (YLPNLTTTIIVLAIAIIVCYL). The Lumenal portion of the chain corresponds to 264–293 (QSVRVELPIRSTRARGTNNVYPIKLLYTGC). The helical transmembrane segment at 294-314 (LSVLFSYTILFYIHIFAFVLI) threads the bilayer. At 315-339 (QLVAKNEPTHIICKIMGHYENANNL) the chain is on the cytoplasmic side. A helical transmembrane segment spans residues 340–360 (LAVPTFPLSLLAPPTSFFKGV). Threonine 361 is a topological domain (lumenal). Residues 362 to 382 (QQPLTFITYSAFILVTGIWFA) form a helical membrane-spanning segment. The Cytoplasmic segment spans residues 383–421 (DKWQAISGSSARDVALEFKDQGITLMGRREQNVAKELNK). A helical transmembrane segment spans residues 422 to 442 (VIPIAAVTGASVLSLITVIGE). Residues 443–449 (SLGLKGK) are Lumenal-facing. The chain crosses the membrane as a helical span at residues 450 to 470 (AAGIVVGIAGGFSLLEVITIE). Topologically, residues 471-490 (YQQSGGQSALNQVLGVPGAM) are cytoplasmic.

Belongs to the SecY/SEC61-alpha family. Component of the heterotrimeric Ssh1 complex, which is composed of SSH1, SBH2 and SSS1.

It is found in the endoplasmic reticulum membrane. Part of the Ssh1 complex, which probably is the major component of a channel-forming translocon complex that may function exclusively in the cotranslational pathway of protein endoplasmic reticulum (ER) import. This chain is Sec sixty-one protein homolog (SSH1), found in Saccharomyces cerevisiae (strain ATCC 204508 / S288c) (Baker's yeast).